A 38-amino-acid polypeptide reads, in one-letter code: Large ribosomal subunit protein bL36A (38 aa).

The protein belongs to the bacterial ribosomal protein bL36 family.

This chain is Large ribosomal subunit protein bL36A, found in Pectobacterium atrosepticum (strain SCRI 1043 / ATCC BAA-672) (Erwinia carotovora subsp. atroseptica).